The sequence spans 331 residues: Carbonic anhydrase-related protein 11 (331 aa).

A signal peptide spans 1–23; that stretch reads MGGAARLSAPRALVLWAVLGAAA. The Alpha-carbonic anhydrase domain occupies 33 to 306; that stretch reads DWWSYKDNLQ…LAHRALRGNR (274 aa). Asparagine 118, asparagine 170, asparagine 189, and asparagine 263 each carry an N-linked (GlcNAc...) asparagine glycan. The interval 303-331 is disordered; it reads RGNRDPRHPERRCRGPNYRLHVDGAPHGR. Residues 322–331 are compositionally biased toward basic and acidic residues; the sequence is LHVDGAPHGR.

Belongs to the alpha-carbonic anhydrase family.

Its subcellular location is the secreted. In terms of biological role, does not have a catalytic activity. In Sus scrofa (Pig), this protein is Carbonic anhydrase-related protein 11 (CA11).